A 415-amino-acid polypeptide reads, in one-letter code: Squalene synthase clz20 (415 aa).

The N-linked (GlcNAc...) asparagine glycan is linked to asparagine 114. The chain crosses the membrane as a helical span at residues 395-415 (ADTMYLAVLVLGVFGVVAAIL).

It belongs to the phytoene/squalene synthase family. The cofactor is Mg(2+).

It is found in the membrane. It carries out the reaction 2 (2E,6E)-farnesyl diphosphate + NADH + H(+) = squalene + 2 diphosphate + NAD(+). The enzyme catalyses 2 (2E,6E)-farnesyl diphosphate + NADPH + H(+) = squalene + 2 diphosphate + NADP(+). The protein operates within terpene metabolism; lanosterol biosynthesis; lanosterol from farnesyl diphosphate: step 1/3. Its function is as follows. Squalene synthase; part of the gene cluster that mediates the biosynthesis of squalestatin S1 (SQS1, also known as zaragozic acid A), a heavily oxidized fungal polyketide that offers potent cholesterol lowering activity by targeting squalene synthase (SS). Catalyzes the condensation of 2 two farnesyl pyrophosphate moieties to form squalene. The presence of a gene encoding a squalene synthase supports the identification of the cluster as being responsible for SQS1 production and suggests a likely mechanism for self-resistance. The chain is Squalene synthase clz20 from Cochliobolus lunatus (Filamentous fungus).